The primary structure comprises 404 residues: Multidrug resistance protein MdtG (404 aa).

The next 11 helical transmembrane spans lie at 19–39 (LGCFLTGAAFSLVMPFLPLYV), 56–76 (LVFSITFLFSAIASPFWGGLA), 90–110 (LGMAIVMLLMGMAQNIWQFLI), 113–133 (ALLGLLGGFIPNANALIATQV), 149–169 (GVSGALLGPLAGGLLAGHYGL), 171–191 (PVFFITASVLFICFLLTFFFI), 222–242 (LFVTTLIIQVATGSIAPILTL), 254–274 (IAFISGMIASVPGVAALLSAP), 288–308 (ILIVALIISVLLLIPMSFVQT), 317–337 (FLLGAADGALLPAVQTLLVYN), and 376–396 (AVFCVTAGVVLFNAIYSWNSL).

The protein belongs to the major facilitator superfamily. DHA1 family. MdtG (TC 2.A.1.2.20) subfamily.

The protein resides in the cell inner membrane. The chain is Multidrug resistance protein MdtG from Salmonella paratyphi C (strain RKS4594).